The sequence spans 65 residues: Photosystem II reaction center protein H (65 aa).

A helical transmembrane segment spans residues 27 to 47; sequence GAVPVMAFIGVLLLVFLVIML.

The protein belongs to the PsbH family. In terms of assembly, PSII is composed of 1 copy each of membrane proteins PsbA, PsbB, PsbC, PsbD, PsbE, PsbF, PsbH, PsbI, PsbJ, PsbK, PsbL, PsbM, PsbT, PsbX, PsbY, Psb30/Ycf12, peripheral proteins PsbO, CyanoQ (PsbQ), PsbU, PsbV and a large number of cofactors. It forms dimeric complexes.

The protein resides in the cellular thylakoid membrane. One of the components of the core complex of photosystem II (PSII), required for its stability and/or assembly. PSII is a light-driven water:plastoquinone oxidoreductase that uses light energy to abstract electrons from H(2)O, generating O(2) and a proton gradient subsequently used for ATP formation. It consists of a core antenna complex that captures photons, and an electron transfer chain that converts photonic excitation into a charge separation. The chain is Photosystem II reaction center protein H from Prochlorococcus marinus (strain NATL1A).